The chain runs to 510 residues: Probable cytochrome P450 312a1 (510 aa).

Cys455 is a binding site for heme.

The protein belongs to the cytochrome P450 family. Heme is required as a cofactor.

Its subcellular location is the endoplasmic reticulum membrane. The protein localises to the microsome membrane. Its function is as follows. May be involved in the metabolism of insect hormones and in the breakdown of synthetic insecticides. The protein is Probable cytochrome P450 312a1 (Cyp312a1) of Drosophila melanogaster (Fruit fly).